Consider the following 482-residue polypeptide: MAAALVLRTWSRAAGQLICVRYFQTCGNVHVLKPKYVCFFGYPPFKYSHPYQWLKTTAALQGQIVQFKLSDIGEGIREVTVKEWYVKEGDTVSQFDSICEVQSDKASVTITSRYDGVIKKLYYNLDDTAYVGKPLVDIETEALKDSEEDVVETPAVSHDEHTHQEIKGQKTLATPAVRRLAMENNIKLSEVIGSGKDGRILKEDILNYLEKQTGAILPPSPKAEIMPPPPKPKDRTIPIPISKPPVFIGKDRTEPVKGFHKAMVKTMSAALKIPHFGYCDEVDLTELVKLREELKPIAFARGIKLSFMPFFLKAASLGLLQFPILNASVDENCQNITYKASHNIGIAMDTEQGLIVPNVKNVQIRSIFEIATELNRLQKLGSAGQLSTNDLIGGTFTLSNIGSIGGTYAKPVILPPEVAIGALGTIKALPRFNEKGEVCKAQIMNVSWSADHRIIDGATVSRFSNLWKSYLENPAFMLLDLK.

A mitochondrion-targeting transit peptide spans 1-61 (MAAALVLRTW…QWLKTTAALQ (61 aa)). The Lipoyl-binding domain occupies 64–139 (IVQFKLSDIG…YVGKPLVDIE (76 aa)). N6-lipoyllysine is present on Lys105. An N6-succinyllysine modification is found at Lys133. The tract at residues 145–160 (DSEEDVVETPAVSHDE) is critical for association with PPM1K. The tract at residues 146–171 (SEEDVVETPAVSHDEHTHQEIKGQKT) is disordered. A compositionally biased stretch (basic and acidic residues) spans 157–168 (SHDEHTHQEIKG). Residues 172–209 (LATPAVRRLAMENNIKLSEVIGSGKDGRILKEDILNYL) form the Peripheral subunit-binding (PSBD) domain. Position 196 is an N6-acetyllysine; alternate (Lys196). An N6-succinyllysine; alternate modification is found at Lys196. At Lys202 the chain carries N6-acetyllysine. Pro residues predominate over residues 218–230 (PPSPKAEIMPPPP). The disordered stretch occupies residues 218-238 (PPSPKAEIMPPPPKPKDRTIP). The residue at position 220 (Ser220) is a Phosphoserine. Residues Lys243 and Lys250 each carry the N6-acetyllysine modification. Residue Lys261 is modified to N6-succinyllysine. Position 289 is an N6-acetyllysine; alternate (Lys289). Lys289 carries the post-translational modification N6-succinyllysine; alternate. Arg291 is a binding site for CoA. 2 positions are modified to N6-acetyllysine: Lys295 and Lys304. 8 residues coordinate CoA: Ser306, Asp349, Gln378, Ser399, Asn400, Ser403, Gly424, and Ile426. Position 435 is an N6-acetyllysine (Lys435). Lys440 carries the post-translational modification N6-acetyllysine; alternate. Lys440 carries the N6-succinyllysine; alternate modification. Residues His452 and Asp456 contribute to the active site.

It belongs to the 2-oxoacid dehydrogenase family. In terms of assembly, forms a 24-polypeptide structural core with octahedral symmetry that represents the E2 component of the branched-chain alpha-ketoacid dehydrogenase (BCKDH) complex. The BCKDH complex is composed of three major building blocks E1, E2 and E3. It is organized around E2, a 24-meric cubic core composed of DBT, to which are associated 6 to 12 copies of E1, and approximately 6 copies of the dehydrogenase E3, a DLD dimer. Interacts with PPM1K with a 24:1 stoichiometry; the N-terminal region (residues 49-61) of PPM1K and C-terminal linker of the lipoyl domain of DBT/E2 (residues 145-160) are critical for this interaction whereas the lipoyl prosthetic group is dispensable. This interaction requires colocalization in mitochondria. PPM1K competes with BCKDK for binding to DBT; this interaction is modulated by branched-chain alpha-keto acids (BCKAs). At steady state, BCKDH holoenzyme preferentially binds BCKDK and BCKDHA is phosphorylated. In response to high levels of BCKAs, BCKDK is replaced by PPM1K leading to BCKDHA dephosphorylation. Requires (R)-lipoate as cofactor. Expressed in kidney (at protein level).

The protein resides in the mitochondrion matrix. It catalyses the reaction N(6)-[(R)-dihydrolipoyl]-L-lysyl-[protein] + 2-methylpropanoyl-CoA = N(6)-[(R)-S(8)-2-methylpropanoyldihydrolipoyl]-L-lysyl-[protein] + CoA. The branched-chain alpha-keto dehydrogenase complex catalyzes the overall conversion of alpha-keto acids to acyl-CoA and CO(2). It contains multiple copies of three enzymatic components: branched-chain alpha-keto acid decarboxylase (E1), lipoamide acyltransferase (E2) and lipoamide dehydrogenase (E3). Within this complex, the catalytic function of this enzyme is to accept, and to transfer to coenzyme A, acyl groups that are generated by the branched-chain alpha-keto acid decarboxylase component. In Bos taurus (Bovine), this protein is Lipoamide acyltransferase component of branched-chain alpha-keto acid dehydrogenase complex, mitochondrial (DBT).